A 133-amino-acid chain; its full sequence is ATP synthase epsilon chain (133 aa).

Belongs to the ATPase epsilon chain family. In terms of assembly, F-type ATPases have 2 components, CF(1) - the catalytic core - and CF(0) - the membrane proton channel. CF(1) has five subunits: alpha(3), beta(3), gamma(1), delta(1), epsilon(1). CF(0) has three main subunits: a, b and c.

It is found in the cell membrane. Functionally, produces ATP from ADP in the presence of a proton gradient across the membrane. This is ATP synthase epsilon chain (atpC) from Alkalihalophilus pseudofirmus (strain ATCC BAA-2126 / JCM 17055 / OF4) (Bacillus pseudofirmus).